A 441-amino-acid chain; its full sequence is S-adenosylmethionine synthase 1 (441 aa).

Glu9 serves as a coordination point for Mg(2+). Residue His15 coordinates ATP. Residue Glu43 participates in K(+) binding. Residues Glu56 and Gln99 each contribute to the L-methionine site. ATP is bound by residues 167–169 (DGK), 235–238 (SGRF), Asp246, 252–253 (RK), Ala269, Lys273, and Lys277. Asp246 contacts L-methionine. Lys277 is a binding site for L-methionine.

This sequence belongs to the AdoMet synthase family. In terms of assembly, homotetramer. Mn(2+) serves as cofactor. It depends on Mg(2+) as a cofactor. Co(2+) is required as a cofactor. The cofactor is K(+).

It is found in the cytoplasm. The enzyme catalyses L-methionine + ATP + H2O = S-adenosyl-L-methionine + phosphate + diphosphate. Its pathway is amino-acid biosynthesis; S-adenosyl-L-methionine biosynthesis; S-adenosyl-L-methionine from L-methionine: step 1/1. Functionally, catalyzes the formation of S-adenosylmethionine from methionine and ATP. The reaction comprises two steps that are both catalyzed by the same enzyme: formation of S-adenosylmethionine (AdoMet) and triphosphate, and subsequent hydrolysis of the triphosphate. This chain is S-adenosylmethionine synthase 1 (SAMS1), found in Daucus carota (Wild carrot).